A 336-amino-acid polypeptide reads, in one-letter code: MFGQRLDTLGAMSSSVSSPSPETGKKILLAAPRGYCAGVDRAVETVERALEEYGAPIYVRKEIVHNRYVVDTLAEKGVIFVEEASEAPEGAHMVFSAHGVSPAVKEEAAAKNLQAIDAACPLVTKVHNEVKRFDKQGFHILFIGHEGHEEVEGTMGHSLDRTHLVDGIESIPGLPAFLADEPNLIWLSQTTLSVDETMEIVRELKKVYPQLQDPPSDDICYATQNRQVAVKAIAERCDLMIVVGSTNSSNSVRLVEVALQAGAKNAYLVDYAHQIDEAWLDGVQTIGISSGASVPEILVTGVLERLAGYGFDDVEEVTTAAEKIVFALPRVLRPAR.

The interval 1 to 23 is disordered; the sequence is MFGQRLDTLGAMSSSVSSPSPET. Position 36 (Cys36) interacts with [4Fe-4S] cluster. His65 and His98 together coordinate (2E)-4-hydroxy-3-methylbut-2-enyl diphosphate. 2 residues coordinate dimethylallyl diphosphate: His65 and His98. The isopentenyl diphosphate site is built by His65 and His98. [4Fe-4S] cluster is bound at residue Cys120. Residue His148 coordinates (2E)-4-hydroxy-3-methylbut-2-enyl diphosphate. His148 contributes to the dimethylallyl diphosphate binding site. His148 contacts isopentenyl diphosphate. Glu150 serves as the catalytic Proton donor. Thr190 contacts (2E)-4-hydroxy-3-methylbut-2-enyl diphosphate. Cys220 contributes to the [4Fe-4S] cluster binding site. Residues Ser248, Ser249, Asn250, and Ser293 each contribute to the (2E)-4-hydroxy-3-methylbut-2-enyl diphosphate site. Dimethylallyl diphosphate contacts are provided by Ser248, Ser249, Asn250, and Ser293. Ser248, Ser249, Asn250, and Ser293 together coordinate isopentenyl diphosphate.

This sequence belongs to the IspH family. [4Fe-4S] cluster is required as a cofactor.

It carries out the reaction isopentenyl diphosphate + 2 oxidized [2Fe-2S]-[ferredoxin] + H2O = (2E)-4-hydroxy-3-methylbut-2-enyl diphosphate + 2 reduced [2Fe-2S]-[ferredoxin] + 2 H(+). The enzyme catalyses dimethylallyl diphosphate + 2 oxidized [2Fe-2S]-[ferredoxin] + H2O = (2E)-4-hydroxy-3-methylbut-2-enyl diphosphate + 2 reduced [2Fe-2S]-[ferredoxin] + 2 H(+). It functions in the pathway isoprenoid biosynthesis; dimethylallyl diphosphate biosynthesis; dimethylallyl diphosphate from (2E)-4-hydroxy-3-methylbutenyl diphosphate: step 1/1. It participates in isoprenoid biosynthesis; isopentenyl diphosphate biosynthesis via DXP pathway; isopentenyl diphosphate from 1-deoxy-D-xylulose 5-phosphate: step 6/6. Catalyzes the conversion of 1-hydroxy-2-methyl-2-(E)-butenyl 4-diphosphate (HMBPP) into a mixture of isopentenyl diphosphate (IPP) and dimethylallyl diphosphate (DMAPP). Acts in the terminal step of the DOXP/MEP pathway for isoprenoid precursor biosynthesis. In Corynebacterium efficiens (strain DSM 44549 / YS-314 / AJ 12310 / JCM 11189 / NBRC 100395), this protein is 4-hydroxy-3-methylbut-2-enyl diphosphate reductase.